The chain runs to 327 residues: Phenylalanine--tRNA ligase alpha subunit (327 aa).

E252 contributes to the Mg(2+) binding site.

It belongs to the class-II aminoacyl-tRNA synthetase family. Phe-tRNA synthetase alpha subunit type 1 subfamily. Tetramer of two alpha and two beta subunits. The cofactor is Mg(2+).

Its subcellular location is the cytoplasm. The catalysed reaction is tRNA(Phe) + L-phenylalanine + ATP = L-phenylalanyl-tRNA(Phe) + AMP + diphosphate + H(+). The polypeptide is Phenylalanine--tRNA ligase alpha subunit (Escherichia coli O139:H28 (strain E24377A / ETEC)).